Reading from the N-terminus, the 754-residue chain is MTLNQLLQKLEATSPILQANFGIERESLRVDRQGQLVHTPHPSCLGARSFHPYIQTDFCEFQMELITPVAKSTTEARRFLGAITDVAGRSIATDEVLWPLSMPPRLKAEEIQVAQLENDFERHYRNYLAEKYGTKLQAISGIHYNMELGKDLVEALFQESDQTDMIAFKNALYLKLAQNYLRYRWVITYLFGASPIAEQGFFDQEVPEPMRSFRNSDHGYVNKEEIQVSFVSLEDYVSAIETYIEQGDLIAEKEFYSAVRFRGQKVNRSFLDKGITYLEFRNFDLNPFERIGISQTTMDTVHLLILAFLWLDSPENVDQALAQGHALNEKIALSHPLEPLPSEAKTQDIVTALDQLVQHFGLGDYHQDLVKQVKAAFADPNQTLSAQLLPYIKDKSLAEFALNKALAYHDYDWTAHYALKGYEEMELSTQMLLFDAIQKGIHFEILDEQDQFLKLWHQDHVEYVKNGNMTSKDNYVVPLAMANKTVTKKILADASFPVPSGDEFTSLEEGLAYYPLIKDKQIVVKPKSTNFGLGISIFQEPASLDNYQKALEIAFAEDTSVLVEEFIPGTEYRFFILDGRCEAVLLRVAANVIGDGKHTIRELVAQKNANPLRGRDHRSPLEIIELGDIEQLMLAQQGYTPDDILPEGKKVNLRRNSNISTGGDSIDVTETMDSSYQELAAAMATSMGAWACGVDLIIPDETQIATKENPHCTCIELNFNPSMYMHTYCAEGPGQAITTKILDKLFPEIVAGQT.

Positions 1-332 are glutamate--cysteine ligase; sequence MTLNQLLQKL…QGHALNEKIA (332 aa). Residues 488-746 enclose the ATP-grasp domain; the sequence is KKILADASFP…ITTKILDKLF (259 aa). 515–573 serves as a coordination point for ATP; it reads PLIKDKQIVVKPKSTNFGLGISIFQEPASLDNYQKALEIAFAEDTSVLVEEFIPGTEYR. Mg(2+)-binding residues include Asp695, Glu716, and Asn718. The Mn(2+) site is built by Asp695, Glu716, and Asn718.

In the N-terminal section; belongs to the glutamate--cysteine ligase type 1 family. Type 2 subfamily. In terms of assembly, monomer. It depends on Mg(2+) as a cofactor. Requires Mn(2+) as cofactor.

The enzyme catalyses L-cysteine + L-glutamate + ATP = gamma-L-glutamyl-L-cysteine + ADP + phosphate + H(+). The catalysed reaction is gamma-L-glutamyl-L-cysteine + glycine + ATP = glutathione + ADP + phosphate + H(+). It functions in the pathway sulfur metabolism; glutathione biosynthesis; glutathione from L-cysteine and L-glutamate: step 1/2. It participates in sulfur metabolism; glutathione biosynthesis; glutathione from L-cysteine and L-glutamate: step 2/2. In terms of biological role, synthesizes glutathione from L-glutamate and L-cysteine via gamma-L-glutamyl-L-cysteine. In Streptococcus thermophilus (strain ATCC BAA-250 / LMG 18311), this protein is Glutathione biosynthesis bifunctional protein GshAB.